The sequence spans 87 residues: Small ribosomal subunit protein bS20 (87 aa).

This sequence belongs to the bacterial ribosomal protein bS20 family.

In terms of biological role, binds directly to 16S ribosomal RNA. This chain is Small ribosomal subunit protein bS20, found in Nitrosomonas europaea (strain ATCC 19718 / CIP 103999 / KCTC 2705 / NBRC 14298).